The following is a 293-amino-acid chain: Light-independent protochlorophyllide reductase iron-sulfur ATP-binding protein (293 aa).

Residues 10 to 15 (GIGKST) and Lys-39 each bind ATP. Ser-14 is a Mg(2+) binding site. Residues Cys-95 and Cys-129 each contribute to the [4Fe-4S] cluster site. ATP is bound at residue 180–181 (NR).

It belongs to the NifH/BchL/ChlL family. Homodimer. Protochlorophyllide reductase is composed of three subunits; ChlL, ChlN and ChlB. Requires [4Fe-4S] cluster as cofactor.

Its subcellular location is the plastid. The protein localises to the chloroplast. The catalysed reaction is chlorophyllide a + oxidized 2[4Fe-4S]-[ferredoxin] + 2 ADP + 2 phosphate = protochlorophyllide a + reduced 2[4Fe-4S]-[ferredoxin] + 2 ATP + 2 H2O. Its pathway is porphyrin-containing compound metabolism; chlorophyll biosynthesis (light-independent). Its function is as follows. Component of the dark-operative protochlorophyllide reductase (DPOR) that uses Mg-ATP and reduced ferredoxin to reduce ring D of protochlorophyllide (Pchlide) to form chlorophyllide a (Chlide). This reaction is light-independent. The L component serves as a unique electron donor to the NB-component of the complex, and binds Mg-ATP. This chain is Light-independent protochlorophyllide reductase iron-sulfur ATP-binding protein, found in Adiantum capillus-veneris (Maidenhair fern).